The primary structure comprises 278 residues: MAYQVTTFYHFTRLNCLAEKQSRWQELGDRLGLKGTILLAEEGVNATIAGESAAIEEMVKIMAADLGLTSVPQRHSWAKTIPFQRMKVKIKPEIVSLGQPQVNPEKQVGTYVSPQQWNQLLQDPDVVVIDTRNDYEVAIGTFQGAVNPCTKKFRQFPDYVKNNLDQQKNKKVAMFCTGGIRCEKASAYLLEEGFAEVYHLRGGILHYLETIAPEESLWQGECFVFDERVAVQEGLKVGSHALCDHCGYPLRVGDLAEIRYAVRHCPQCGLTVAVSNEL.

The Rhodanese domain occupies 122 to 216 (QDPDVVVIDT…YLETIAPEES (95 aa)). Catalysis depends on Cys176, which acts as the Cysteine persulfide intermediate.

Belongs to the TrhO family.

The catalysed reaction is uridine(34) in tRNA + AH2 + O2 = 5-hydroxyuridine(34) in tRNA + A + H2O. Its function is as follows. Catalyzes oxygen-dependent 5-hydroxyuridine (ho5U) modification at position 34 in tRNAs. This chain is tRNA uridine(34) hydroxylase, found in Synechocystis sp. (strain ATCC 27184 / PCC 6803 / Kazusa).